The sequence spans 181 residues: Cyclic AMP-dependent transcription factor ATF-3 (181 aa).

The interval 76–96 (VTKSEVAPEEDERKRRRRERN) is disordered. K78 is covalently cross-linked (Glycyl lysine isopeptide (Lys-Gly) (interchain with G-Cter in SUMO2)). Residues 86 to 149 (DERKRRRRER…QHLIYMLNLH (64 aa)) enclose the bZIP domain. The basic motif stretch occupies residues 88–110 (RKRRRRERNKIAAAKCRNKKKEK). Positions 114–142 (LQKESEKLESVNAELKAQIEELKNEKQHL) are leucine-zipper. T162 carries the post-translational modification Phosphothreonine. Residue K175 forms a Glycyl lysine isopeptide (Lys-Gly) (interchain with G-Cter in SUMO2) linkage.

The protein belongs to the bZIP family. ATF subfamily. As to quaternary structure, ATF3 alone can bind DNA, but it preferentially forms heteromeric complexes with JUN and JUNB and does not interact with FOS. In terms of tissue distribution, expressed in tissues containing skeletal muscle or smooth muscle. Expressed in cutaneous and muscular sensory neurons.

The protein localises to the nucleus. In terms of biological role, this protein binds the cAMP response element (CRE) (consensus: 5'-GTGACGT[AC][AG]-3'), a sequence present in many viral and cellular promoters. Represses transcription from promoters with ATF sites. It may repress transcription by stabilizing the binding of inhibitory cofactors at the promoter. This is Cyclic AMP-dependent transcription factor ATF-3 (Atf3) from Rattus norvegicus (Rat).